The following is a 302-amino-acid chain: Dihydroorotate dehydrogenase B (NAD(+)), catalytic subunit (302 aa).

FMN contacts are provided by residues serine 20 and 44-45 (KG). Substrate is bound by residues lysine 44 and 68-72 (NSVGL). Residues asparagine 98 and asparagine 125 each contribute to the FMN site. Residue asparagine 125 participates in substrate binding. Cysteine 128 acts as the Nucleophile in catalysis. Residues lysine 163 and isoleucine 189 each coordinate FMN. 190-191 (NT) serves as a coordination point for substrate. FMN-binding positions include glycine 215, 241–242 (GG), and 263–264 (GT).

It belongs to the dihydroorotate dehydrogenase family. Type 1 subfamily. In terms of assembly, heterotetramer of 2 PyrK and 2 PyrD type B subunits. It depends on FMN as a cofactor.

It is found in the cytoplasm. It catalyses the reaction (S)-dihydroorotate + NAD(+) = orotate + NADH + H(+). Its pathway is pyrimidine metabolism; UMP biosynthesis via de novo pathway; orotate from (S)-dihydroorotate (NAD(+) route): step 1/1. Its function is as follows. Catalyzes the conversion of dihydroorotate to orotate with NAD(+) as electron acceptor. In Thermoanaerobacter sp. (strain X514), this protein is Dihydroorotate dehydrogenase B (NAD(+)), catalytic subunit (pyrD).